A 277-amino-acid chain; its full sequence is E3 ubiquitin-protein ligase CCNB1IP1 (277 aa).

An RING-type; atypical zinc finger spans residues 4-51 (CEDMLLCNYRKCRIKLSGYAWVTACSHIFCDQHGSGEFSRSPAICPAC). Residues 127 to 182 (QQIQSKDVELTSMKGEVTSMKKVLEEYKKKFSDISEKLMERNRQYQKLQGLYDSLR) are a coiled coil.

As to quaternary structure, interacts with CCNB1, UBE2L3 and NF2. In terms of processing, ubiquitinated; autoubiquitinated. Post-translationally, phosphorylated by CDK1 on serine or threonine residues (in vitro). In terms of tissue distribution, highly expressed in heart. Detected at intermediate levels in liver and kidney, and at low levels in placenta, brain and lung.

The protein resides in the nucleus. The protein localises to the chromosome. It catalyses the reaction S-ubiquitinyl-[E2 ubiquitin-conjugating enzyme]-L-cysteine + [acceptor protein]-L-lysine = [E2 ubiquitin-conjugating enzyme]-L-cysteine + N(6)-ubiquitinyl-[acceptor protein]-L-lysine.. It functions in the pathway protein modification; protein ubiquitination. Functionally, ubiquitin E3 ligase that acts as a limiting factor for crossing-over during meiosis: required during zygonema to limit the colocalization of RNF212 with MutS-gamma-associated recombination sites and thereby establish early differentiation of crossover and non-crossover sites. Later, it is directed by MutL-gamma to stably accumulate at designated crossover sites. Probably promotes the dissociation of RNF212 and MutS-gamma to allow the progression of recombination and the implementation of the final steps of crossing over. Modulates cyclin-B levels and participates in the regulation of cell cycle progression through the G2 phase. Overexpression causes delayed entry into mitosis. The polypeptide is E3 ubiquitin-protein ligase CCNB1IP1 (CCNB1IP1) (Homo sapiens (Human)).